The following is a 221-amino-acid chain: Fructokinase (221 aa).

The protein belongs to the carbohydrate kinase PfkB family.

It carries out the reaction D-fructose + ATP = D-fructose 6-phosphate + ADP + H(+). This Salmonella thompson protein is Fructokinase (scrK).